The primary structure comprises 461 residues: UDP-N-acetylmuramoylalanine--D-glutamate ligase (461 aa).

Gly-117–Thr-123 is an ATP binding site.

It belongs to the MurCDEF family.

It localises to the cytoplasm. It carries out the reaction UDP-N-acetyl-alpha-D-muramoyl-L-alanine + D-glutamate + ATP = UDP-N-acetyl-alpha-D-muramoyl-L-alanyl-D-glutamate + ADP + phosphate + H(+). It participates in cell wall biogenesis; peptidoglycan biosynthesis. Cell wall formation. Catalyzes the addition of glutamate to the nucleotide precursor UDP-N-acetylmuramoyl-L-alanine (UMA). This is UDP-N-acetylmuramoylalanine--D-glutamate ligase from Synechococcus sp. (strain CC9605).